Here is a 134-residue protein sequence, read N- to C-terminus: Ribonuclease VapC1 (134 aa).

The 120-residue stretch at Ile4 to Gln123 folds into the PINc domain. Mg(2+) contacts are provided by Asp6 and Asp97.

Belongs to the PINc/VapC protein family. It depends on Mg(2+) as a cofactor.

Toxic component of a type II toxin-antitoxin (TA) system. Has ssRNase activity. Upon expression in E.coli inhibits growth in liquid culture; this toxic effect is neutralized by coexpression with cognate antitoxin VapB1. Its RNase activity is partially inhibited in vitro by VapB1. In Rickettsia felis (strain ATCC VR-1525 / URRWXCal2) (Rickettsia azadi), this protein is Ribonuclease VapC1.